Reading from the N-terminus, the 195-residue chain is Inner membrane-spanning protein YciB (195 aa).

Helical transmembrane passes span 34 to 54 (IYGA…ALWL), 65 to 85 (FTLG…EDTF), 88 to 108 (WKAP…HFIG), 131 to 151 (LNIA…YVVF), and 160 to 180 (FKVF…GIFL).

It belongs to the YciB family.

Its subcellular location is the cell inner membrane. In terms of biological role, plays a role in cell envelope biogenesis, maintenance of cell envelope integrity and membrane homeostasis. This chain is Inner membrane-spanning protein YciB, found in Pseudomonas paraeruginosa (strain DSM 24068 / PA7) (Pseudomonas aeruginosa (strain PA7)).